The sequence spans 181 residues: Nucleoside-triphosphatase THEP1 (181 aa).

ATP is bound by residues 12–19 (GPVGSIKS) and 104–111 (VIVIDEIG).

It belongs to the THEP1 NTPase family.

It carries out the reaction a ribonucleoside 5'-triphosphate + H2O = a ribonucleoside 5'-diphosphate + phosphate + H(+). In terms of biological role, has nucleotide phosphatase activity towards ATP, GTP, CTP, TTP and UTP. May hydrolyze nucleoside diphosphates with lower efficiency. This Thermoplasma acidophilum (strain ATCC 25905 / DSM 1728 / JCM 9062 / NBRC 15155 / AMRC-C165) protein is Nucleoside-triphosphatase THEP1.